We begin with the raw amino-acid sequence, 1005 residues long: Ephrin type-A receptor 8 (1005 aa).

A signal peptide spans 1–27 (MAPARGRLPPALWVVTAAAAAATCVSA). The Extracellular segment spans residues 28–542 (ARGEVNLLDT…KPRPRYDTRT (515 aa)). The region spanning 31–209 (EVNLLDTSTI…YYKKCPAMVR (179 aa)) is the Eph LBD domain. 2 consecutive Fibronectin type-III domains span residues 328–438 (PPSA…TNQA) and 439–534 (APSQ…TGKP). 3 N-linked (GlcNAc...) asparagine glycosylation sites follow: asparagine 340, asparagine 407, and asparagine 432. Residues 543 to 563 (IVWICLTLITGLVVLLLLLIC) form a helical membrane-spanning segment. The mediates interaction with ANKS1A and ANKS1B stretch occupies residues 564-570 (KKRHCGY). The Cytoplasmic portion of the chain corresponds to 564–1005 (KKRHCGYSKA…TSTQGPRRHL (442 aa)). The segment at 589–644 (APPPVFLPLHHPPGKLPEPQFYAEPHTYEEPGRAGRSFTREIEASRIHIEKIIGSG) is mediates interaction with PIK3CG and required for endocytosis. Tyrosine 616 is modified (phosphotyrosine; by autocatalysis). Residues 635–896 (IHIEKIIGSG…QIVSVLDALI (262 aa)) form the Protein kinase domain. ATP-binding positions include 641 to 649 (IGSGDSGEV) and lysine 667. Aspartate 760 serves as the catalytic Proton acceptor. Tyrosine 839 is subject to Phosphotyrosine; by autocatalysis. The SAM domain occupies 930–994 (GGGLTVGDWL…LGSIQTMRAQ (65 aa)). The PDZ-binding signature appears at 1003–1005 (RHL).

Belongs to the protein kinase superfamily. Tyr protein kinase family. Ephrin receptor subfamily. In terms of assembly, heterotetramer upon binding of the ligand. The heterotetramer is composed of an ephrin dimer and a receptor dimer. Oligomerization is probably required to induce biological responses. May also form heterodimers with other ephrin receptors. Interacts with FYN; possible downstream effector of EPHA8 in regulation of cell adhesion. Interacts with PIK3CG; regulates integrin-mediated cell adhesion to substrate. Interacts with TIAM1; regulates clathrin-mediated endocytosis of EPHA8. Interacts with ANKS1A and ANKS1B; EPHA8 kinase activity-independent but stimulated by EPHA8 ubiquitination. In terms of processing, phosphorylated. Phosphorylation is stimulated upon binding of its ligands including EFNA2, EFNA3 and EFNA5. Autophosphorylation on Tyr-616 is critical for association with FYN. Autophosphorylation on Tyr-839 modulates tyrosine kinase activity. Ubiquitinated. Ubiquitination by CBL regulates the receptor stability and activity through proteasomal degradation. ANKS1A prevents ubiquitination and degradation.

It is found in the cell membrane. It localises to the cell projection. The protein resides in the early endosome membrane. It carries out the reaction L-tyrosyl-[protein] + ATP = O-phospho-L-tyrosyl-[protein] + ADP + H(+). Receptor tyrosine kinase which binds promiscuously GPI-anchored ephrin-A family ligands residing on adjacent cells, leading to contact-dependent bidirectional signaling into neighboring cells. The signaling pathway downstream of the receptor is referred to as forward signaling while the signaling pathway downstream of the ephrin ligand is referred to as reverse signaling. The GPI-anchored ephrin-A EFNA2, EFNA3, and EFNA5 are able to activate EPHA8 through phosphorylation. With EFNA5 may regulate integrin-mediated cell adhesion and migration on fibronectin substrate but also neurite outgrowth. During development of the nervous system also plays a role in axon guidance. Downstream effectors of the EPHA8 signaling pathway include FYN which promotes cell adhesion upon activation by EPHA8 and the MAP kinases in the stimulation of neurite outgrowth. The chain is Ephrin type-A receptor 8 (EPHA8) from Homo sapiens (Human).